The primary structure comprises 276 residues: MRLVILDNYDLASEWAAKYICNRIIKFKPGQDRYFSLGLPTGSTPLGCYKKLIEYHKSGNLSFKYVKTFNMDEYVGLPRNHPESYHSYMWNNFFKHIDIDPNNAHILDGNAADLQAECDAFEEKIKEAGGIDLFVGGIGPDGHIAFNEPGSSLVSRTRLKTLAMDTILANAKYFDGDLSKVPTMALTVGVGTVMDAREVMILITGAHKAFALYKAMEEGVNHMWTVSAFQQHPRTIFVCDEDATLELRVKTVKYFKGLMHVHNKLVDPLYSMKEGN.

Asp72 functions as the Proton acceptor; for enolization step in the catalytic mechanism. Residues 103-131 adopt a coiled-coil conformation; it reads NAHILDGNAADLQAECDAFEEKIKEAGGI. The active-site For ring-opening step is Asp141. His143 (proton acceptor; for ring-opening step) is an active-site residue. The For ring-opening step role is filled by Glu148. Thr161 carries the phosphothreonine modification.

It belongs to the glucosamine/galactosamine-6-phosphate isomerase family. Homohexamer.

Its subcellular location is the cytoplasm. The enzyme catalyses alpha-D-glucosamine 6-phosphate + H2O = beta-D-fructose 6-phosphate + NH4(+). It functions in the pathway nucleotide-sugar biosynthesis; UDP-N-acetyl-alpha-D-glucosamine biosynthesis; alpha-D-glucosamine 6-phosphate from D-fructose 6-phosphate: step 1/1. Allosterically activated by N-acetylglucosamine-6-phosphate (GlcNAc6P). Catalyzes the reversible conversion of alpha-D-glucosamine 6-phosphate (GlcN-6P) into beta-D-fructose 6-phosphate (Fru-6P) and ammonium ion, a regulatory reaction step in de novo uridine diphosphate-N-acetyl-alpha-D-glucosamine (UDP-GlcNAc) biosynthesis via hexosamine pathway. Deamination is coupled to aldo-keto isomerization mediating the metabolic flux from UDP-GlcNAc toward Fru-6P. At high ammonium level can drive amination and isomerization of Fru-6P toward hexosamines and UDP-GlcNAc synthesis. Has a role in fine tuning the metabolic fluctuations of cytosolic UDP-GlcNAc and their effects on hyaluronan synthesis that occur during tissue remodeling. In Mus musculus (Mouse), this protein is Glucosamine-6-phosphate deaminase 2.